Reading from the N-terminus, the 638-residue chain is ABC transporter G family member 12 (638 aa).

The disordered stretch occupies residues 42–61 (KQEKAKKKNDTESSTGDMNT). Residues 58 to 301 (DMNTGVSTTI…SLGYPCPNNT (244 aa)) enclose the ABC transporter domain. 91–98 (GPSGSGKS) is an ATP binding site. Residues 374-633 (GNFVARVGTA…WTSYLALHFL (260 aa)) enclose the ABC transmembrane type-2 domain. 7 consecutive transmembrane segments (helical) span residues 376 to 396 (FVAR…CFAG), 410 to 430 (TIFF…SLFL), 459 to 479 (TLIV…FAHL), 484 to 504 (GHFF…DFMI), 516 to 536 (MTFA…GFYV), 544 to 564 (SFGW…LVVN), and 612 to 632 (FGVV…ALHF).

The protein belongs to the ABC transporter superfamily. ABCG family. Eye pigment precursor importer (TC 3.A.1.204) subfamily.

Its subcellular location is the membrane. The protein is ABC transporter G family member 12 (abcG12) of Dictyostelium discoideum (Social amoeba).